Consider the following 331-residue polypeptide: NmrA-like family domain-containing oxidoreductase himF (331 aa).

NADP(+)-binding positions include 8 to 13 (GATGNQ), 34 to 38 (RNAES), 55 to 56 (DG), 76 to 78 (TNG), Lys-133, and 155 to 167 (WFFE…QMAA).

The protein belongs to the NmrA-type oxidoreductase family.

It functions in the pathway secondary metabolite biosynthesis. In terms of biological role, nmrA-like family domain-containing oxidoreductase; part of the him gene cluster that mediates the biosynthesis of himeic acid A, a ubiquitin-activating enzyme (E1) inhibitor. First, himA, together with the trans-enoyl reductase himH, catalyzes the formation of apolyketide chain, which is then condensed with leucine by the NRPS activity of himA. Dieckmann cyclization and release from himA gives a tetramic acid intermediate as the product of himA PKS-NRPS. HimG then catalyzes alpha-oxidation of the tetramic acid ring, with a subsequent rearrangement to yield apyrone intermediate. Two terminal methyl groups of polyketide and amide side chains are oxidized to carboxylic acids by himC cytochrome P450 monooxygenase to form himeic acid A. Himeic acid A is further converted to himeic acid B and C during culture growth. No gene responsible for pyrone to pyridone conversion was found in the him gene cluster and himeic acid A is non-enzymatically converted to himeic acid C by the incorporation of an ammonium nitrogen atom in a pH5 buffer, and to himeic acid B at a conversion ratio of 50% during incubation in MeOH for 5 days. This chain is NmrA-like family domain-containing oxidoreductase himF, found in Aspergillus japonicus.